The following is a 414-amino-acid chain: Serine/threonine transporter SstT (414 aa).

The Cytoplasmic portion of the chain corresponds to 2-15; it reads TTQRSPGLFRRLAH. The helical transmembrane segment at 16 to 36 threads the bilayer; the sequence is GSLVKQILVGLVLGILLAWIS. The Periplasmic segment spans residues 37 to 45; that stretch reads KPAAEAVGL. Residues 46–66 traverse the membrane as a helical segment; the sequence is LGTLFVGALKAVAPILVLMLV. Over 67–83 the chain is Cytoplasmic; it reads MASIANHQHGQKTNIRP. Residues 84-104 traverse the membrane as a helical segment; it reads ILFLYLLGTFSAALAAVVFSF. Residues 105-142 lie on the Periplasmic side of the membrane; the sequence is AFPSTLHLSSSAGDISPPSGIVEVMRGLVMSMVSNPID. The helical transmembrane segment at 143-163 threads the bilayer; sequence ALLKGNYIGILVWAIGLGFAL. Topologically, residues 164-179 are cytoplasmic; that stretch reads RHGNETTKNLVNDMSN. The helical transmembrane segment at 180–200 threads the bilayer; that stretch reads AVTFMVKLVIRFAPFGIFGLV. The Periplasmic segment spans residues 201-217; that stretch reads SSTLATTGFSTLWGYAQ. The chain crosses the membrane as a helical span at residues 218-238; it reads LLVVLVGCMLLVALVVNPLLV. The Cytoplasmic segment spans residues 239 to 299; that stretch reads WWKIRRNPFP…VSIPLGATIN (61 aa). Residues 300–320 form a helical membrane-spanning segment; the sequence is MAGAAITITVLTLAAVNTLGI. Residues 321-331 are Periplasmic-facing; it reads PVDLPTALLLS. Residues 332–352 traverse the membrane as a helical segment; sequence VVASLCACGASGVAGGSLLLI. The Cytoplasmic portion of the chain corresponds to 353 to 414; sequence PLACNMFGIS…DRLANSALRN (62 aa).

The protein belongs to the dicarboxylate/amino acid:cation symporter (DAACS) (TC 2.A.23) family.

Its subcellular location is the cell inner membrane. The enzyme catalyses L-serine(in) + Na(+)(in) = L-serine(out) + Na(+)(out). It carries out the reaction L-threonine(in) + Na(+)(in) = L-threonine(out) + Na(+)(out). Its function is as follows. Involved in the import of serine and threonine into the cell, with the concomitant import of sodium (symport system). The polypeptide is Serine/threonine transporter SstT (Shigella flexneri).